The primary structure comprises 118 residues: Large ribosomal subunit protein bL20 (118 aa).

The protein belongs to the bacterial ribosomal protein bL20 family.

Its function is as follows. Binds directly to 23S ribosomal RNA and is necessary for the in vitro assembly process of the 50S ribosomal subunit. It is not involved in the protein synthesizing functions of that subunit. This Staphylococcus epidermidis (strain ATCC 35984 / DSM 28319 / BCRC 17069 / CCUG 31568 / BM 3577 / RP62A) protein is Large ribosomal subunit protein bL20.